The sequence spans 237 residues: Phosphoribosylaminoimidazole-succinocarboxamide synthase (237 aa).

The protein belongs to the SAICAR synthetase family.

The catalysed reaction is 5-amino-1-(5-phospho-D-ribosyl)imidazole-4-carboxylate + L-aspartate + ATP = (2S)-2-[5-amino-1-(5-phospho-beta-D-ribosyl)imidazole-4-carboxamido]succinate + ADP + phosphate + 2 H(+). The protein operates within purine metabolism; IMP biosynthesis via de novo pathway; 5-amino-1-(5-phospho-D-ribosyl)imidazole-4-carboxamide from 5-amino-1-(5-phospho-D-ribosyl)imidazole-4-carboxylate: step 1/2. This Pseudomonas fluorescens (strain SBW25) protein is Phosphoribosylaminoimidazole-succinocarboxamide synthase.